A 496-amino-acid chain; its full sequence is Zinc finger protein PLAGL2 (496 aa).

C2H2-type zinc fingers lie at residues 68–92 (YSCP…MATH), 98–120 (HQCM…LQTH), 127–149 (LHCS…LAMH), 156–178 (LSCK…LKAH), 191–213 (HPCD…LVVH), and 219–242 (FLCQ…KKSH).

It belongs to the krueppel C2H2-type zinc-finger protein family.

The protein resides in the nucleus. In terms of biological role, shows weak transcriptional activatory activity. This chain is Zinc finger protein PLAGL2 (PLAGL2), found in Homo sapiens (Human).